Here is a 335-residue protein sequence, read N- to C-terminus: Glyceraldehyde-3-phosphate dehydrogenase 2 (335 aa).

Residues Arg12–Ile13, Asp35, Arg79, and Ser121 each bind NAD(+). D-glyceraldehyde 3-phosphate contacts are provided by residues Ser152 to Thr154 and Thr183. Cys153 functions as the Nucleophile in the catalytic mechanism. Asn184 is an NAD(+) binding site. D-glyceraldehyde 3-phosphate-binding positions include Arg198, Thr211–Gly212, and Arg234. Asn316 contacts NAD(+).

The protein belongs to the glyceraldehyde-3-phosphate dehydrogenase family. As to quaternary structure, homotetramer.

The protein localises to the cytoplasm. The catalysed reaction is D-glyceraldehyde 3-phosphate + phosphate + NAD(+) = (2R)-3-phospho-glyceroyl phosphate + NADH + H(+). The protein operates within carbohydrate degradation; glycolysis; pyruvate from D-glyceraldehyde 3-phosphate: step 1/5. Its activity is regulated as follows. Inhibited by pentalenolactone. Catalyzes the oxidative phosphorylation of glyceraldehyde 3-phosphate (G3P) to 1,3-bisphosphoglycerate (BPG) using the cofactor NAD. The first reaction step involves the formation of a hemiacetal intermediate between G3P and a cysteine residue, and this hemiacetal intermediate is then oxidized to a thioester, with concomitant reduction of NAD to NADH. The reduced NADH is then exchanged with the second NAD, and the thioester is attacked by a nucleophilic inorganic phosphate to produce BPG. This Streptomyces avermitilis (strain ATCC 31267 / DSM 46492 / JCM 5070 / NBRC 14893 / NCIMB 12804 / NRRL 8165 / MA-4680) protein is Glyceraldehyde-3-phosphate dehydrogenase 2 (gap2).